The sequence spans 85 residues: Colicin E3 immunity protein (85 aa).

Belongs to the cloacin immunity protein family. As to quaternary structure, native colicin E3 is a 1:1 complex of A chain and protein B (Im3). Binds between the translocation and cytotoxic RNase domains of intact ColE3, blocking access to the 16S rRNA substrate. Forms a very tight 1:1 complex with the cytotoxic fragment (residues 456-551) of ColE3 (ceaC).

The cognate immunity protein for colicin E3 (ColE3), protects cells which harbor the plasmid ColE3 against the toxic action of ColE3. This protein inhibits the 16S RNA hydrolyzing activity of ColE3 by binding with very high affinity to the C-terminal catalytic domain of ColE3. In Escherichia coli, this protein is Colicin E3 immunity protein.